A 394-amino-acid polypeptide reads, in one-letter code: 1-deoxy-D-xylulose 5-phosphate reductoisomerase (394 aa).

The NADPH site is built by threonine 14, glycine 15, serine 16, isoleucine 17, glycine 40, asparagine 43, and asparagine 130. Residue lysine 131 participates in 1-deoxy-D-xylulose 5-phosphate binding. Residue glutamate 132 participates in NADPH binding. Aspartate 154 is a binding site for Mn(2+). 1-deoxy-D-xylulose 5-phosphate-binding residues include serine 155, glutamate 156, serine 180, and histidine 203. Residue glutamate 156 participates in Mn(2+) binding. Glycine 209 is a binding site for NADPH. The 1-deoxy-D-xylulose 5-phosphate site is built by serine 216, asparagine 221, lysine 222, and glutamate 225. Glutamate 225 contacts Mn(2+).

Belongs to the DXR family. Requires Mg(2+) as cofactor. The cofactor is Mn(2+).

It catalyses the reaction 2-C-methyl-D-erythritol 4-phosphate + NADP(+) = 1-deoxy-D-xylulose 5-phosphate + NADPH + H(+). It functions in the pathway isoprenoid biosynthesis; isopentenyl diphosphate biosynthesis via DXP pathway; isopentenyl diphosphate from 1-deoxy-D-xylulose 5-phosphate: step 1/6. Catalyzes the NADPH-dependent rearrangement and reduction of 1-deoxy-D-xylulose-5-phosphate (DXP) to 2-C-methyl-D-erythritol 4-phosphate (MEP). This Corynebacterium efficiens (strain DSM 44549 / YS-314 / AJ 12310 / JCM 11189 / NBRC 100395) protein is 1-deoxy-D-xylulose 5-phosphate reductoisomerase.